We begin with the raw amino-acid sequence, 754 residues long: uncharacterized protein (754 aa).

Active-site charge relay system residues include S585 and H707. The segment at 733 to 754 (SHAPPPSRKARSAARRSTDPVR) is disordered.

It belongs to the peptidase S9A family.

This is an uncharacterized protein from Sinorhizobium fredii (strain NBRC 101917 / NGR234).